Reading from the N-terminus, the 870-residue chain is Radial spoke head 10 homolog B2 (870 aa).

Residues 1–16 show a composition bias toward basic and acidic residues; it reads MVKEKKKADKKGEKSA. The interval 1 to 44 is disordered; it reads MVKEKKKADKKGEKSARSPSSLSDNLDFSKQDGNTTRQEMSPAG. Over residues 17–39 the composition is skewed to polar residues; the sequence is RSPSSLSDNLDFSKQDGNTTRQE. MORN repeat units follow at residues 86-108, 109-131, 132-154, 155-177, 179-201, 204-226, 227-249, 251-273, 284-306, and 307-329; these read YEGEKVRGLYEGEGFAAFQGGCT, YRGMFSEGLMHGQGTYIWADGLK, YEGDFVKNVPMNHGVYTWPDGSM, YEGEVVNGMRNGFGMFKCSTQPV, YIGHWCNGKRHGKGSIYYNQEGT, YEGDWVQNIKKGWGIRCYKSGNI, YEGQWEDNMRHGEGRMRWLTTNE, YTGRWERGIQNGFGTHTWFLKRI, YIGEFVNGYRHGRGKFYYASGAM, and YDGEWVSNKKHGMGRLTFKNGRV. A disordered region spans residues 674 to 704; it reads NKSPSAVMSHESDAAHSDSARSSSSKLELSP. Basic and acidic residues predominate over residues 683 to 692; it reads HESDAAHSDS. A compositionally biased stretch (low complexity) spans 693–703; sequence ARSSSSKLELS. Positions 784–811 form a coiled coil; sequence KEKIRADRLRSTAQAQQRKMEDDELEAR. A disordered region spans residues 840–870; that stretch reads VSSSHLILDPPKEDVTVSPSSKTITSKKKKK.

As to quaternary structure, interacts with RSPH6A. Does not appear to be part of the axonemal radial spoke complexes 1 or 2.

Its subcellular location is the cytoplasm. The protein resides in the cytoskeleton. It is found in the cilium axoneme. The protein localises to the cell projection. It localises to the cilium. Its subcellular location is the flagellum. Functionally, may function as part of the axonemal radial spoke complex 3 (RS3). Radial spoke complexes are important for ciliary motility. The protein is Radial spoke head 10 homolog B2 (RSPH10B2) of Homo sapiens (Human).